The following is a 213-amino-acid chain: Protein big brother (213 aa).

It belongs to the CBF-beta family.

The protein localises to the nucleus. Functionally, regulates the DNA-binding properties of Runt. The chain is Protein big brother (Bgb) from Drosophila melanogaster (Fruit fly).